A 465-amino-acid chain; its full sequence is Probable glycine dehydrogenase (decarboxylating) subunit 1 (465 aa).

It belongs to the GcvP family. N-terminal subunit subfamily. The glycine cleavage system is composed of four proteins: P, T, L and H. In this organism, the P 'protein' is a heterodimer of two subunits.

The enzyme catalyses N(6)-[(R)-lipoyl]-L-lysyl-[glycine-cleavage complex H protein] + glycine + H(+) = N(6)-[(R)-S(8)-aminomethyldihydrolipoyl]-L-lysyl-[glycine-cleavage complex H protein] + CO2. Functionally, the glycine cleavage system catalyzes the degradation of glycine. The P protein binds the alpha-amino group of glycine through its pyridoxal phosphate cofactor; CO(2) is released and the remaining methylamine moiety is then transferred to the lipoamide cofactor of the H protein. The protein is Probable glycine dehydrogenase (decarboxylating) subunit 1 of Aeropyrum pernix (strain ATCC 700893 / DSM 11879 / JCM 9820 / NBRC 100138 / K1).